The primary structure comprises 1073 residues: APDPGPGPMGMMGARGPPGPPGPPGAQGHTGHGPPGPPGKSGEDGNNGRPGKPGDRGAPGPQGARGFPGTPGLPGMKGHRGYTGLDGRKGEPGGAGAKGEPGAHGAAGSPGLAGSRGRAGPAGPAGARGADGNAGPAGPAGPLGAAGPPGFPGGPGPKGELGPAGATGPSGAQGSRGEPGPNGAVGPVGPPGNPGNNGLNGAKGAAGTPGVAGAPGFPGPRGGPGPQGPQGAAGQRGLAGDPGTQGVKGDGGPKGEPGNSGPQGPPGPQGEEGKRGPTGELGATGPAGNRSGPLGMPGARGATGAAGPRGPPGDAGRAGESGPAGLRGLPGSPGSSGPPGKEGAAGPAGQDGRGGPPGPTGPRGPSGEAGKPGDKGATGPTGLRGAPGPDGNNGATGATGPAGGPGEKGEQGAAGAPGFQGLPGPAGGAGEAGKPGDRGLPGDQGVSGPAGAKGERGNPGAAGASGPQGPLGPRGPAGAPGTDGGKGEPGAAGAAGGPGHQGPGGMPGERGAAGAPGGKGEKGEAGHRGPDGNAGRDGSRGMPGPAGPPGPTGANGDKGESGSFGPAGPAGARGASGERGEVGPAGAPGFAGPPGADGQTGARGERGPSGGKGESGPAGPAGPAGQSGPPGASGPAGPTGARGDNGPPGLTGFPGAAGRVGAAGPAGLVGPPGSAGPAGKDGPRGLRGDPGPSGPSGDQGMVGPPGPSGEKGPSGPAGXPGXPGTSGPLGLQGFVGLPGARGDRGSPGGAGGVGEPGRVGPAGPAGARGNLGLPGMTGPQGEAGREGNPGNDGPPGRPGAPGFKGDRGNRGESGPGGAAGAVGPAGARGAAGPSGPRGEKGVAGEKGERGLRGHAGLQGMPGPSGPSGDTGSAGPNGPAGPRGPAGPHGPPGKDGRAGGHGTLGSPGARGPPGYVGPAGPPGSPGLPGPPGPAGGGYDVSGYDEYRAAKDYEVDATLKSLNTQLENLLTPEGSRKNPARLSHPEWSSGFYPNQGCSNDALKETCLHAHPGSLARAVVVQGSNDVELRFTFSVLEDGCTRTNKPSRLPLLDLAPLDLGGADQEFGLDLGPVCFK.

A disordered region spans residues Ala1 to Val939. Low complexity-rich tracts occupy residues Glu100–Pro148, Glu178–Pro187, and Pro194–Pro215. A compositionally biased stretch (pro residues) spans Phe217–Gln227. Residues Pro229–Ala239 show a composition bias toward low complexity. The span at Gly246–Gly255 shows a compositional bias: gly residues. Composition is skewed to low complexity over residues Met296–Ala315, Ser321–Ala348, Ala386–Thr399, and Gln411–Pro423. Residues Gly424–Gly433 are compositionally biased toward gly residues. A compositionally biased stretch (low complexity) spans Asn458–Gln468. The span at Gly481 to Gly508 shows a compositional bias: gly residues. Over residues Lys519–Pro530 the composition is skewed to basic and acidic residues. Low complexity-rich tracts occupy residues Ser561 to Ala575 and Pro584 to Asp597. Residues Gly607–Gly616 are compositionally biased toward gly residues. Low complexity-rich tracts occupy residues Pro617–Arg642, Phe653–Lys680, and Ser708–Leu729. Residues Gly745–Gly757 are compositionally biased toward gly residues. The segment covering Arg758–Pro774 has biased composition (low complexity). A compositionally biased stretch (gly residues) spans Gly811–Gly820. A compositionally biased stretch (low complexity) spans Ala821–Pro836. The segment covering Arg837–Leu851 has biased composition (basic and acidic residues). 2 stretches are compositionally biased toward low complexity: residues Leu857–Asn876 and Pro906–Pro917. Positions Ala918–Pro932 are enriched in pro residues. The 35-residue stretch at Arg1039–Lys1073 folds into the Fibrillar collagen NC1 domain.

Belongs to the fibrillar collagen family.

The protein localises to the secreted. The protein resides in the extracellular space. It localises to the extracellular matrix. This Epinephelus aeneus (White grouper) protein is Collagen alpha-2(I) chain.